Reading from the N-terminus, the 636-residue chain is Protein cueball (636 aa).

Positions 1-27 are cleaved as a signal peptide; sequence MKLCTSQQFGVAVLFIVLNICSPLADA. Over 28-517 the chain is Extracellular; that stretch reads SPIAWDFAVT…ADGPSSLRSG (490 aa). N-linked (GlcNAc...) asparagine glycosylation is found at Asn83 and Asn109. LDL-receptor class B repeat units lie at residues 122-169, 170-214, and 215-260; these read RNLF…DICR, RQLY…DQLS, and DRIF…TEDT. The N-linked (GlcNAc...) asparagine glycan is linked to Asn190. Asn285 and Asn339 each carry an N-linked (GlcNAc...) asparagine glycan. EGF-like domains are found at residues 350–384 and 419–456; these read RMDA…ARCE and EYYK…TRCE. 5 cysteine pairs are disulfide-bonded: Cys359–Cys372, Cys374–Cys383, Cys423–Cys433, Cys427–Cys444, and Cys446–Cys455. Residues Asn449, Asn458, and Asn493 are each glycosylated (N-linked (GlcNAc...) asparagine). A helical membrane pass occupies residues 518 to 538; it reads SVIIVLVVGIVSSLALVAVIV. Residues 539-636 are Cytoplasmic-facing; it reads HGLRLIYKPK…IHNMEDDLLT (98 aa).

The protein belongs to the cueball family.

The protein resides in the cell membrane. Has a role in spermatogenesis and oogenesis. This is Protein cueball from Drosophila virilis (Fruit fly).